We begin with the raw amino-acid sequence, 549 residues long: Cation/acetate symporter ActP (549 aa).

The next 13 helical transmembrane spans lie at 33–53 (WQAI…TYWA), 77–97 (LAIA…ALVF), 103–123 (GLIY…LIAE), 148–168 (ILSA…QMVG), 183–203 (IAVV…GMLA), 206–226 (WVQI…AFMV), 262–282 (ISAL…PHIL), 303–323 (GFMG…IMLV), 355–375 (LFLG…VAGL), 404–424 (VSKI…VLFE), 428–448 (IAFM…PIIL), 464–484 (GGWL…TIWV), and 493–513 (IFPY…GIWF).

The protein belongs to the sodium:solute symporter (SSF) (TC 2.A.21) family.

It localises to the cell inner membrane. Its function is as follows. Transports acetate. The polypeptide is Cation/acetate symporter ActP (Salmonella gallinarum (strain 287/91 / NCTC 13346)).